Reading from the N-terminus, the 456-residue chain is Bifunctional protein GlmU (456 aa).

Positions 1-229 (MLNNAMSVVI…LSEVEGVNNR (229 aa)) are pyrophosphorylase. Residues 11-14 (LAAG), lysine 25, glutamine 76, 81-82 (GT), 103-105 (YGD), glycine 140, glutamate 154, asparagine 169, and asparagine 227 contribute to the UDP-N-acetyl-alpha-D-glucosamine site. Residue aspartate 105 participates in Mg(2+) binding. A Mg(2+)-binding site is contributed by asparagine 227. The linker stretch occupies residues 230 to 250 (LQLSRLERVYQSEQAEKLLLA). An N-acetyltransferase region spans residues 251-456 (GVMLRDPARF…EGWRRPVKKK (206 aa)). 2 residues coordinate UDP-N-acetyl-alpha-D-glucosamine: arginine 333 and lysine 351. Catalysis depends on histidine 363, which acts as the Proton acceptor. Residues tyrosine 366 and asparagine 377 each coordinate UDP-N-acetyl-alpha-D-glucosamine. Residues alanine 380, 386–387 (NY), serine 405, alanine 423, and arginine 440 contribute to the acetyl-CoA site.

It in the N-terminal section; belongs to the N-acetylglucosamine-1-phosphate uridyltransferase family. The protein in the C-terminal section; belongs to the transferase hexapeptide repeat family. In terms of assembly, homotrimer. Mg(2+) serves as cofactor.

The protein resides in the cytoplasm. The catalysed reaction is alpha-D-glucosamine 1-phosphate + acetyl-CoA = N-acetyl-alpha-D-glucosamine 1-phosphate + CoA + H(+). The enzyme catalyses N-acetyl-alpha-D-glucosamine 1-phosphate + UTP + H(+) = UDP-N-acetyl-alpha-D-glucosamine + diphosphate. The protein operates within nucleotide-sugar biosynthesis; UDP-N-acetyl-alpha-D-glucosamine biosynthesis; N-acetyl-alpha-D-glucosamine 1-phosphate from alpha-D-glucosamine 6-phosphate (route II): step 2/2. Its pathway is nucleotide-sugar biosynthesis; UDP-N-acetyl-alpha-D-glucosamine biosynthesis; UDP-N-acetyl-alpha-D-glucosamine from N-acetyl-alpha-D-glucosamine 1-phosphate: step 1/1. It participates in bacterial outer membrane biogenesis; LPS lipid A biosynthesis. Functionally, catalyzes the last two sequential reactions in the de novo biosynthetic pathway for UDP-N-acetylglucosamine (UDP-GlcNAc). The C-terminal domain catalyzes the transfer of acetyl group from acetyl coenzyme A to glucosamine-1-phosphate (GlcN-1-P) to produce N-acetylglucosamine-1-phosphate (GlcNAc-1-P), which is converted into UDP-GlcNAc by the transfer of uridine 5-monophosphate (from uridine 5-triphosphate), a reaction catalyzed by the N-terminal domain. The polypeptide is Bifunctional protein GlmU (Escherichia coli O139:H28 (strain E24377A / ETEC)).